A 215-amino-acid polypeptide reads, in one-letter code: Large ribosomal subunit protein uL3 (215 aa).

Residues 136–155 (GVSISHRSHGSTGQRQDPGK) form a disordered region. Residue Gln151 is modified to N5-methylglutamine.

It belongs to the universal ribosomal protein uL3 family. As to quaternary structure, part of the 50S ribosomal subunit. Forms a cluster with proteins L14 and L19. In terms of processing, methylated by PrmB.

One of the primary rRNA binding proteins, it binds directly near the 3'-end of the 23S rRNA, where it nucleates assembly of the 50S subunit. This Rickettsia canadensis (strain McKiel) protein is Large ribosomal subunit protein uL3.